The primary structure comprises 357 residues: uncharacterized protein (357 aa).

Residues 1–19 (MKRILSFIFIILFFNSSYA) form the signal peptide.

This is an uncharacterized protein from Rickettsia prowazekii (strain Madrid E).